The following is a 377-amino-acid chain: NADH dehydrogenase [ubiquinone] 1 alpha subcomplex subunit 9, mitochondrial (377 aa).

The transit peptide at M1–Q35 directs the protein to the mitochondrion. K175 bears the N6-succinyllysine mark. An N6-acetyllysine mark is found at K189 and K370.

It belongs to the complex I NDUFA9 subunit family. In terms of assembly, complex I is composed of 45 different subunits. This a component of the hydrophobic protein fraction. Interacts with BLOC1S1. Interacts with SLC2A4. Interacts with CLOCK. Interacts with RAB5IF. FAD is required as a cofactor. Post-translationally, acetylated on lysine residues. BLOC1S1 is required for acetylation. Acetylated by CLOCK in a circadian manner.

Its subcellular location is the mitochondrion matrix. In terms of biological role, accessory subunit of the mitochondrial membrane respiratory chain NADH dehydrogenase (Complex I), that is believed not to be involved in catalysis. Complex I functions in the transfer of electrons from NADH to the respiratory chain. The immediate electron acceptor for the enzyme is believed to be ubiquinone. The sequence is that of NADH dehydrogenase [ubiquinone] 1 alpha subcomplex subunit 9, mitochondrial (Ndufa9) from Mus musculus (Mouse).